A 594-amino-acid polypeptide reads, in one-letter code: Protein REBELOTE (594 aa).

Over residues 1–13 (MGKLGKKARKFAK) the composition is skewed to basic residues. 2 disordered regions span residues 1–21 (MGKL…SVEK) and 35–58 (AKRN…PKKR). Short sequence motifs (nuclear localization signal) lie at residues 8–15 (ARKFAKKN), 35–42 (AKRNERHQ), and 512–519 (LKKFHERS). Residues 36–58 (KRNERHQAGDKQEKKVEQQPKKR) show a composition bias toward basic and acidic residues.

Belongs to the NOC2 family. In terms of assembly, interacts with SWA2, NOC2 and NOC3 in both the nucleolus and nucleoplasm. Binds to ENAP1 and OBE1. In terms of tissue distribution, expressed at low levels in roots, shoots, leaves, stems, inflorescences, flowers and siliques, with highest levels dividing tissues.

It localises to the nucleus. It is found in the nucleolus. Its subcellular location is the nucleoplasm. Its function is as follows. Collaboratively with CYP40/SQN and ULT1, influences floral meristem (FM) determinacy in an AGAMOUS and SUPERMAN-dependent manner, thus contributing to the floral developmental homeostasis. The polypeptide is Protein REBELOTE (Arabidopsis thaliana (Mouse-ear cress)).